The primary structure comprises 147 residues: Ponticulin-like protein C1 (147 aa).

A signal peptide spans M1–A20. N118 is lipidated: GPI-like-anchor amidated asparagine. N118 carries N-linked (GlcNAc...) asparagine glycosylation. Residues S119–I147 constitute a propeptide, removed in mature form.

It belongs to the ponticulin family. In terms of processing, the GPI-like-anchor contains a phosphoceramide group, rather than a phosphatidyl group.

It is found in the cell membrane. The protein is Ponticulin-like protein C1 (ponC1) of Dictyostelium discoideum (Social amoeba).